Here is a 141-residue protein sequence, read N- to C-terminus: Hemoglobin subunit alpha-A (141 aa).

The Globin domain occupies 1–141 (VLSASDKTNV…VAKELTAKYR (141 aa)). His58 contacts O2. His87 serves as a coordination point for heme b.

It belongs to the globin family. As to quaternary structure, heterotetramer of two alpha chains and two beta chains. As to expression, red blood cells.

Its function is as follows. Involved in oxygen transport from the lung to the various peripheral tissues. This chain is Hemoglobin subunit alpha-A (HBAA), found in Phalacrocorax carbo (Great cormorant).